A 447-amino-acid polypeptide reads, in one-letter code: N-succinylarginine dihydrolase (447 aa).

Residues 19–28, Asn110, and 137–138 contribute to the substrate site; these read AGLSFGNEAS and HR. Residue Glu174 is part of the active site. Substrate is bound at residue Arg212. Residue His248 is part of the active site. 2 residues coordinate substrate: Asp250 and Asn359. Cys365 acts as the Nucleophile in catalysis.

It belongs to the succinylarginine dihydrolase family. Homodimer.

It catalyses the reaction N(2)-succinyl-L-arginine + 2 H2O + 2 H(+) = N(2)-succinyl-L-ornithine + 2 NH4(+) + CO2. Its pathway is amino-acid degradation; L-arginine degradation via AST pathway; L-glutamate and succinate from L-arginine: step 2/5. Catalyzes the hydrolysis of N(2)-succinylarginine into N(2)-succinylornithine, ammonia and CO(2). In Salmonella enteritidis PT4 (strain P125109), this protein is N-succinylarginine dihydrolase.